We begin with the raw amino-acid sequence, 428 residues long: D-inositol 3-phosphate glycosyltransferase (428 aa).

His17 is a 1D-myo-inositol 3-phosphate binding site. Residues 23–24 (QP) and Gly31 each bind UDP-N-acetyl-alpha-D-glucosamine. 1D-myo-inositol 3-phosphate contacts are provided by residues 28–33 (DAGGMN), Arg86, Tyr119, Thr143, and Arg163. Residues Arg237 and Lys242 each coordinate UDP-N-acetyl-alpha-D-glucosamine. Positions 312, 313, and 315 each coordinate Mg(2+). The UDP-N-acetyl-alpha-D-glucosamine site is built by Glu325 and Glu333. Mg(2+) is bound at residue Thr339.

Belongs to the glycosyltransferase group 1 family. MshA subfamily. As to quaternary structure, homodimer.

The enzyme catalyses 1D-myo-inositol 3-phosphate + UDP-N-acetyl-alpha-D-glucosamine = 1D-myo-inositol 2-acetamido-2-deoxy-alpha-D-glucopyranoside 3-phosphate + UDP + H(+). Functionally, catalyzes the transfer of a N-acetyl-glucosamine moiety to 1D-myo-inositol 3-phosphate to produce 1D-myo-inositol 2-acetamido-2-deoxy-glucopyranoside 3-phosphate in the mycothiol biosynthesis pathway. This chain is D-inositol 3-phosphate glycosyltransferase, found in Thermobispora bispora (strain ATCC 19993 / DSM 43833 / CBS 139.67 / JCM 10125 / KCTC 9307 / NBRC 14880 / R51).